Here is a 730-residue protein sequence, read N- to C-terminus: Denticleless protein homolog (730 aa).

Position 1 is an N-acetylmethionine (M1). 3 WD repeats span residues 47-89 (GVPV…FRKK), 96-135 (AHWN…LIGT), and 138-178 (GHQC…KDGF). Positions 168 to 171 (WDTR) match the DDB1-binding motif motif. Positions 188-198 (AHNTSDKQTPS) are enriched in polar residues. Residues 188-210 (AHNTSDKQTPSKPKKKQNSKGLA) form a disordered region. A Phosphothreonine modification is found at T196. Residues 197-203 (PSKPKKK) carry the Nuclear localization signal motif. WD repeat units lie at residues 214 to 253 (DFQQ…TAYR), 267 to 308 (SSTR…TSPV), 313 to 354 (GHQN…QPPT), and 358 to 398 (GHSQ…EEKP). Residues 243 to 246 (WDLR) carry the DDB1-binding motif motif. Residues 399 to 443 (GGDKLSTVGWASQKKKESRPGLVTVTSSQSTPAKAPRAKCNPSNS) form a disordered region. Phosphoserine is present on residues S410 and S426. Residue T464 is modified to Phosphothreonine; by CDK1 and CDK2. The interval 465–498 (PTFSIKTSPAKARSPINRRGSVSSVSPKPPSSFK) is disordered. S485, S490, S495, and S512 each carry phosphoserine. T516 carries the phosphothreonine modification. A Phosphoserine modification is found at S557. Disordered regions lie at residues 599–631 (SKDS…YASE) and 644–703 (GEGS…TITP). S676 and S679 each carry phosphoserine. The span at 679–689 (SPSSQTPNSRR) shows a compositional bias: polar residues. Residues T684 and T702 each carry the phosphothreonine modification. S717 is subject to Phosphoserine.

The protein belongs to the WD repeat cdt2 family. In terms of assembly, component of the DCX(DTL) E3 ubiquitin ligase complex (also called CRL4(CDT2)), at least composed of CUL4 (CUL4A or CUL4B), DDB1, DTL/CDT2 and RBX1. Interacts with CDKN1A. Interacts with DDB1. Interacts with FBXO11; SCF(FBXWO11) controls DTL stability but DCX(DTL) does not control FBXO11 stability. Interacts with CRY1. Post-translationally, ubiquitinated by the anaphase promoting complex/cyclosome (APC/C). Autoubiquitinated through 'Lys-48'-polyubiquitin chains in a PCNA-independent reaction, allowing proteasomal turnover. Polyubiquitinated by SCF(FBXO11) when not phosphorylated, leading to its degradation. A tight regulation of the polyubiquitination by SCF(FBXO11) is involved in the control of different processes such as TGF-beta signaling, cell cycle progression and exit. In terms of processing, phosphorylated at Thr-464 by CDK1/Cyclin-B and CDK2/Cyclin-A but not by CDK2/Cyclin-E, MAPK1 or PLK1. Phosphorylation at Thr-464 inhibits the interaction with FBXO11 and decreases upon cell cycle exit induced by TGF-beta or serum starvation. In terms of tissue distribution, expressed in placenta and testis, very low expression seen in skeletal muscle. Detected in all hematopoietic tissues examined, with highest expression in thymus and bone marrow. A low level detected in the spleen and lymph node, and barely detectable level in the peripheral leukocytes. RA treatment down-regulated the expression in NT2 cell.

Its subcellular location is the nucleus. It is found in the nucleus membrane. The protein localises to the cytoplasm. The protein resides in the cytoskeleton. It localises to the microtubule organizing center. Its subcellular location is the centrosome. It is found in the chromosome. The protein operates within protein modification; protein ubiquitination. Substrate-specific adapter of a DCX (DDB1-CUL4-X-box) E3 ubiquitin-protein ligase complex required for cell cycle control, DNA damage response and translesion DNA synthesis. The DCX(DTL) complex, also named CRL4(CDT2) complex, mediates the polyubiquitination and subsequent degradation of CDT1, CDKN1A/p21(CIP1), FBH1, KMT5A and SDE2. CDT1 degradation in response to DNA damage is necessary to ensure proper cell cycle regulation of DNA replication. CDKN1A/p21(CIP1) degradation during S phase or following UV irradiation is essential to control replication licensing. KMT5A degradation is also important for a proper regulation of mechanisms such as TGF-beta signaling, cell cycle progression, DNA repair and cell migration. Most substrates require their interaction with PCNA for their polyubiquitination: substrates interact with PCNA via their PIP-box, and those containing the 'K+4' motif in the PIP box, recruit the DCX(DTL) complex, leading to their degradation. In undamaged proliferating cells, the DCX(DTL) complex also promotes the 'Lys-164' monoubiquitination of PCNA, thereby being involved in PCNA-dependent translesion DNA synthesis. The DDB1-CUL4A-DTL E3 ligase complex regulates the circadian clock function by mediating the ubiquitination and degradation of CRY1. The sequence is that of Denticleless protein homolog (DTL) from Homo sapiens (Human).